Consider the following 90-residue polypeptide: Large ribosomal subunit protein uL23c (90 aa).

It belongs to the universal ribosomal protein uL23 family. Part of the 50S ribosomal subunit.

It localises to the plastid. Its subcellular location is the chloroplast. Binds to 23S rRNA. The chain is Large ribosomal subunit protein uL23c (rpl23) from Tetradesmus obliquus (Green alga).